We begin with the raw amino-acid sequence, 79 residues long: ATP synthase subunit c (79 aa).

Transmembrane regions (helical) follow at residues 11 to 31 and 53 to 73; these read MAAAIMMGLAAIGAAIGIGIL and FFIVMGLVDAIPMIAVGLGLY.

It belongs to the ATPase C chain family. F-type ATPases have 2 components, F(1) - the catalytic core - and F(0) - the membrane proton channel. F(1) has five subunits: alpha(3), beta(3), gamma(1), delta(1), epsilon(1). F(0) has three main subunits: a(1), b(2) and c(10-14). The alpha and beta chains form an alternating ring which encloses part of the gamma chain. F(1) is attached to F(0) by a central stalk formed by the gamma and epsilon chains, while a peripheral stalk is formed by the delta and b chains.

Its subcellular location is the cell inner membrane. In terms of biological role, f(1)F(0) ATP synthase produces ATP from ADP in the presence of a proton or sodium gradient. F-type ATPases consist of two structural domains, F(1) containing the extramembraneous catalytic core and F(0) containing the membrane proton channel, linked together by a central stalk and a peripheral stalk. During catalysis, ATP synthesis in the catalytic domain of F(1) is coupled via a rotary mechanism of the central stalk subunits to proton translocation. Functionally, key component of the F(0) channel; it plays a direct role in translocation across the membrane. A homomeric c-ring of between 10-14 subunits forms the central stalk rotor element with the F(1) delta and epsilon subunits. This Proteus mirabilis (strain HI4320) protein is ATP synthase subunit c.